Here is a 104-residue protein sequence, read N- to C-terminus: Large ribosomal subunit protein bL21 (104 aa).

This sequence belongs to the bacterial ribosomal protein bL21 family. Part of the 50S ribosomal subunit. Contacts protein L20.

Its function is as follows. This protein binds to 23S rRNA in the presence of protein L20. The protein is Large ribosomal subunit protein bL21 of Lactococcus lactis subsp. cremoris (strain MG1363).